Reading from the N-terminus, the 356-residue chain is Probable dual-specificity RNA methyltransferase RlmN (356 aa).

Residue glutamate 100 is the Proton acceptor of the active site. The Radical SAM core domain occupies threonine 106–aspartate 340. Residues cysteine 113 and cysteine 345 are joined by a disulfide bond. Residues cysteine 120, cysteine 124, and cysteine 127 each coordinate [4Fe-4S] cluster. Residues glycine 167 to glutamate 168, serine 197, serine 226 to histidine 228, and asparagine 302 each bind S-adenosyl-L-methionine. Catalysis depends on cysteine 345, which acts as the S-methylcysteine intermediate.

It belongs to the radical SAM superfamily. RlmN family. [4Fe-4S] cluster serves as cofactor.

It localises to the cytoplasm. It carries out the reaction adenosine(2503) in 23S rRNA + 2 reduced [2Fe-2S]-[ferredoxin] + 2 S-adenosyl-L-methionine = 2-methyladenosine(2503) in 23S rRNA + 5'-deoxyadenosine + L-methionine + 2 oxidized [2Fe-2S]-[ferredoxin] + S-adenosyl-L-homocysteine. The enzyme catalyses adenosine(37) in tRNA + 2 reduced [2Fe-2S]-[ferredoxin] + 2 S-adenosyl-L-methionine = 2-methyladenosine(37) in tRNA + 5'-deoxyadenosine + L-methionine + 2 oxidized [2Fe-2S]-[ferredoxin] + S-adenosyl-L-homocysteine. Functionally, specifically methylates position 2 of adenine 2503 in 23S rRNA and position 2 of adenine 37 in tRNAs. This chain is Probable dual-specificity RNA methyltransferase RlmN, found in Prochlorococcus marinus (strain MIT 9303).